A 381-amino-acid chain; its full sequence is cAMP-dependent protein kinase type I-beta regulatory subunit (381 aa).

The dimerization and phosphorylation stretch occupies residues 2 to 136; that stretch reads ASPPACPSEE…ALAKAISKNV (135 aa). Phosphoserine is present on S3. Y21 bears the 3'-nitrotyrosine mark. Residues 67–98 form a disordered region; that stretch reads ARQKSNSQSDSHDEEVSPTPPNPVVKARRRRG. Phosphoserine occurs at positions 77 and 83. T85 carries the post-translational modification Phosphothreonine. Positions 96–100 match the Pseudophosphorylation motif motif; sequence RRGGV. The residue at position 97 (R97) is an Omega-N-methylarginine. Residues 137-254, E202, R211, 255-381, E326, and R335 contribute to the 3',5'-cyclic AMP site; these read LFAH…SKVS and ILES…SLTV.

The protein belongs to the cAMP-dependent kinase regulatory chain family. In terms of assembly, the inactive holoenzyme is composed of two regulatory chains and two catalytic chains. Activation by cAMP releases the two active catalytic monomers and the regulatory dimer. Interacts with PRKX; regulates this cAMP-dependent protein kinase. Interacts with C2orf88/smAKAP; this interaction may target PRKAR1B to the plasma membrane. In terms of processing, the pseudophosphorylation site binds to the substrate-binding region of the catalytic chain, resulting in the inhibition of its activity. Four types of regulatory chains are found: I-alpha, I-beta, II-alpha, and II-beta. Their expression varies among tissues and is in some cases constitutive and in others inducible.

Its subcellular location is the cell membrane. Functionally, regulatory subunit of the cAMP-dependent protein kinases involved in cAMP signaling in cells. In Homo sapiens (Human), this protein is cAMP-dependent protein kinase type I-beta regulatory subunit (PRKAR1B).